A 283-amino-acid polypeptide reads, in one-letter code: Pantothenate synthetase (283 aa).

ATP is bound at residue 30–37 (MGNLHDGH). The Proton donor role is filled by His37. Position 61 (Gln61) interacts with (R)-pantoate. Gln61 provides a ligand contact to beta-alanine. Residue 149–152 (GEKD) participates in ATP binding. (R)-pantoate is bound at residue Gln155. ATP contacts are provided by residues Met178 and 186-189 (LSSR).

The protein belongs to the pantothenate synthetase family. As to quaternary structure, homodimer.

The protein localises to the cytoplasm. The catalysed reaction is (R)-pantoate + beta-alanine + ATP = (R)-pantothenate + AMP + diphosphate + H(+). Its pathway is cofactor biosynthesis; (R)-pantothenate biosynthesis; (R)-pantothenate from (R)-pantoate and beta-alanine: step 1/1. Activation requires a combination of a divalent cation, magnesium or manganese, and a monovalent cation, potassium or ammonium. Above the optimum concentration for activation, magnesium and manganese are rather inhibitory. Also activated by 2-mercaptoethanol, dithiothreitol, cysteine and glutathione. Inhibited by divalent cations (mercury, cobalt, zinc, copper, silver), chelating agents (EDTA, EGTA and o-phenanthroline), and analogs of beta-alanine (taurine, gamma-aminobutyrate, gamma-amino-beta-hydroxybutyrate). Its function is as follows. Catalyzes the condensation of pantoate with beta-alanine in an ATP-dependent reaction via a pantoyl-adenylate intermediate. The protein is Pantothenate synthetase (panC) of Escherichia coli (strain K12).